Here is a 789-residue protein sequence, read N- to C-terminus: DNA topoisomerase 4 subunit A (789 aa).

A Topo IIA-type catalytic domain is found at 34–499; that stretch reads LPDLRDGLKP…EKQKVQDSDF (466 aa). Tyr122 acts as the O-(5'-phospho-DNA)-tyrosine intermediate in catalysis.

The protein belongs to the type II topoisomerase GyrA/ParC subunit family. ParC type 2 subfamily. As to quaternary structure, heterotetramer composed of ParC and ParE.

The protein localises to the cell membrane. It catalyses the reaction ATP-dependent breakage, passage and rejoining of double-stranded DNA.. Functionally, topoisomerase IV is essential for chromosome segregation. It relaxes supercoiled DNA. Performs the decatenation events required during the replication of a circular DNA molecule. This chain is DNA topoisomerase 4 subunit A, found in Mycoplasma pneumoniae (strain ATCC 29342 / M129 / Subtype 1) (Mycoplasmoides pneumoniae).